The chain runs to 64 residues: Lingual antimicrobial peptide (64 aa).

Residues 1-24 (MRLHHLLLALLFLVLSAGSGFTQG) form the signal peptide. Cystine bridges form between Cys31-Cys60, Cys38-Cys53, and Cys43-Cys61.

It belongs to the beta-defensin family. LAP/TAP subfamily. As to expression, in many of the exposed epithelial surfaces including conjunctivae, bronchi, colon, urinary tract and trachea.

The protein localises to the secreted. In terms of biological role, shows a broad spectrum of antibacterial and antifungal activities. This chain is Lingual antimicrobial peptide (LAP), found in Bos taurus (Bovine).